Here is a 306-residue protein sequence, read N- to C-terminus: Curved DNA-binding protein (306 aa).

The J domain occupies 5–69 (DYYAIMGVKP…QRRAEYDQMW (65 aa)).

The protein localises to the cytoplasm. It is found in the nucleoid. Functionally, DNA-binding protein that preferentially recognizes a curved DNA sequence. It is probably a functional analog of DnaJ; displays overlapping activities with DnaJ, but functions under different conditions, probably acting as a molecular chaperone in an adaptive response to environmental stresses other than heat shock. Lacks autonomous chaperone activity; binds native substrates and targets them for recognition by DnaK. Its activity is inhibited by the binding of CbpM. This Escherichia coli O17:K52:H18 (strain UMN026 / ExPEC) protein is Curved DNA-binding protein.